A 308-amino-acid polypeptide reads, in one-letter code: F420-non-reducing hydrogenase subunit G (308 aa).

Belongs to the [NiFe]/[NiFeSe] hydrogenase small subunit family. The F420-non-reducing hydrogenase is composed of three subunits; MvhA, MvhD and MvhG. It forms a complex with the heterodisulfide reductase (hdr).

Part of a complex that provides reducing equivalents for heterodisulfide reductase. The polypeptide is F420-non-reducing hydrogenase subunit G (mvhG) (Methanothermobacter marburgensis (strain ATCC BAA-927 / DSM 2133 / JCM 14651 / NBRC 100331 / OCM 82 / Marburg) (Methanobacterium thermoautotrophicum)).